The sequence spans 376 residues: MSLASLSVSPGKGRRVVVGMSGGVDSSVTAWLLKQQGYEVIGLFMKNWEDDDDSEYCSTRQDLLDAASVADLVGVDFEYVNFAAEYKDRVFAEFLREYSAGRTPNPDVLCNAEIKFKAFLDHAMTLGAEHIATGHYARVRAIAGAHGREYQLLKALDGSKDQSYFLHRLNQAQLSRTLFPLGEIHKTEVRRIAHDIGLHNAAKKDSTGICFIGERPFREFLNRYLPTEPGDILTPQGQRVGRHHGLSFYTLGQRKGLGVGGVKGSQRDDGTADAWYVARKDLQHNILYVVQGHDHPWLLSNRLQALDASWVAGRAPELRGYGAKTRYRQADAACVLEQASQGAFELSFSQPQWAVTPGQSAVLYDGDVCLGGGIIA.

ATP contacts are provided by residues G19–S26 and M45. Positions N105–D107 are interaction with target base in tRNA. C110 serves as the catalytic Nucleophile. C110 and C210 form a disulfide bridge. Residue G134 participates in ATP binding. The tract at residues K160 to Q162 is interaction with tRNA. Residue C210 is the Cysteine persulfide intermediate of the active site. The tract at residues R326–Y327 is interaction with tRNA.

It belongs to the MnmA/TRMU family.

The protein resides in the cytoplasm. It carries out the reaction S-sulfanyl-L-cysteinyl-[protein] + uridine(34) in tRNA + AH2 + ATP = 2-thiouridine(34) in tRNA + L-cysteinyl-[protein] + A + AMP + diphosphate + H(+). Catalyzes the 2-thiolation of uridine at the wobble position (U34) of tRNA, leading to the formation of s(2)U34. The chain is tRNA-specific 2-thiouridylase MnmA from Bordetella petrii (strain ATCC BAA-461 / DSM 12804 / CCUG 43448).